A 239-amino-acid chain; its full sequence is Ribosomal RNA small subunit methyltransferase G (239 aa).

Residues glycine 77, phenylalanine 82, 128–129, and arginine 147 contribute to the S-adenosyl-L-methionine site; that span reads AE. Positions 219-239 are disordered; sequence RKTPKKYPRKPGTPNKLPIEK.

The protein belongs to the methyltransferase superfamily. RNA methyltransferase RsmG family.

It localises to the cytoplasm. Specifically methylates the N7 position of guanine in position 535 of 16S rRNA. This chain is Ribosomal RNA small subunit methyltransferase G, found in Bacillus cytotoxicus (strain DSM 22905 / CIP 110041 / 391-98 / NVH 391-98).